The following is an 82-amino-acid chain: Phosphoribosylformylglycinamidine synthase subunit PurS (82 aa).

The protein belongs to the PurS family. In terms of assembly, homodimer. Part of the FGAM synthase complex composed of 1 PurL, 1 PurQ and 2 PurS subunits.

The protein resides in the cytoplasm. It catalyses the reaction N(2)-formyl-N(1)-(5-phospho-beta-D-ribosyl)glycinamide + L-glutamine + ATP + H2O = 2-formamido-N(1)-(5-O-phospho-beta-D-ribosyl)acetamidine + L-glutamate + ADP + phosphate + H(+). It functions in the pathway purine metabolism; IMP biosynthesis via de novo pathway; 5-amino-1-(5-phospho-D-ribosyl)imidazole from N(2)-formyl-N(1)-(5-phospho-D-ribosyl)glycinamide: step 1/2. In terms of biological role, part of the phosphoribosylformylglycinamidine synthase complex involved in the purines biosynthetic pathway. Catalyzes the ATP-dependent conversion of formylglycinamide ribonucleotide (FGAR) and glutamine to yield formylglycinamidine ribonucleotide (FGAM) and glutamate. The FGAM synthase complex is composed of three subunits. PurQ produces an ammonia molecule by converting glutamine to glutamate. PurL transfers the ammonia molecule to FGAR to form FGAM in an ATP-dependent manner. PurS interacts with PurQ and PurL and is thought to assist in the transfer of the ammonia molecule from PurQ to PurL. In Thermotoga maritima (strain ATCC 43589 / DSM 3109 / JCM 10099 / NBRC 100826 / MSB8), this protein is Phosphoribosylformylglycinamidine synthase subunit PurS.